Consider the following 440-residue polypeptide: Streptokinase A (440 aa).

An N-terminal signal peptide occupies residues 1 to 26; the sequence is MKNYLSIGVIALLFALTFGTVKSVQA.

Its function is as follows. This protein is not a protease, but it activates plasminogen by complexing with it. As a potential virulence factor, it is thought to prevent the formation of effective fibrin barriers around the site of infection, thereby contributing to the invasiveness of the cells. This is Streptokinase A (ska) from Streptococcus pyogenes serotype M1.